Here is a 259-residue protein sequence, read N- to C-terminus: Imidazole glycerol phosphate synthase subunit HisF (259 aa).

Residues Asp11 and Asp130 contribute to the active site.

Belongs to the HisA/HisF family. In terms of assembly, heterodimer of HisH and HisF.

It localises to the cytoplasm. It catalyses the reaction 5-[(5-phospho-1-deoxy-D-ribulos-1-ylimino)methylamino]-1-(5-phospho-beta-D-ribosyl)imidazole-4-carboxamide + L-glutamine = D-erythro-1-(imidazol-4-yl)glycerol 3-phosphate + 5-amino-1-(5-phospho-beta-D-ribosyl)imidazole-4-carboxamide + L-glutamate + H(+). It participates in amino-acid biosynthesis; L-histidine biosynthesis; L-histidine from 5-phospho-alpha-D-ribose 1-diphosphate: step 5/9. IGPS catalyzes the conversion of PRFAR and glutamine to IGP, AICAR and glutamate. The HisF subunit catalyzes the cyclization activity that produces IGP and AICAR from PRFAR using the ammonia provided by the HisH subunit. This Polaromonas sp. (strain JS666 / ATCC BAA-500) protein is Imidazole glycerol phosphate synthase subunit HisF.